A 502-amino-acid chain; its full sequence is Protein DETOXIFICATION 49 (502 aa).

Helical transmembrane passes span 41–61 (LPLI…MLFL), 75–95 (LALG…SIGM), 123–143 (LLCS…LLFF), 153–173 (AEIF…LHPI), 190–210 (AFFA…SLGL), 216–236 (ALGA…YIVF), 267–287 (VSVC…GLLL), 293–313 (VASM…PSSL), 338–358 (RTGL…ALMV), 372–392 (IVKL…GNCP), 414–434 (LCCF…FSGF), and 439–459 (LWLG…VVLA).

The protein belongs to the multi antimicrobial extrusion (MATE) (TC 2.A.66.1) family.

It is found in the membrane. This Arabidopsis thaliana (Mouse-ear cress) protein is Protein DETOXIFICATION 49.